The chain runs to 245 residues: Ribonuclease 3 (245 aa).

Residues 19–148 (FKVFQEKIGI…FIGALYLDQG (130 aa)) form the RNase III domain. Residue Glu61 participates in Mg(2+) binding. The active site involves Asp65. Positions 134 and 137 each coordinate Mg(2+). Glu137 is an active-site residue. The 70-residue stretch at 174 to 243 (DYKSQLQELI…AAEALKKLKE (70 aa)) folds into the DRBM domain.

This sequence belongs to the ribonuclease III family. In terms of assembly, homodimer. It depends on Mg(2+) as a cofactor.

It localises to the cytoplasm. It catalyses the reaction Endonucleolytic cleavage to 5'-phosphomonoester.. In terms of biological role, digests double-stranded RNA. Involved in the processing of primary rRNA transcript to yield the immediate precursors to the large and small rRNAs (23S and 16S). Processes some mRNAs, and tRNAs when they are encoded in the rRNA operon. Processes pre-crRNA and tracrRNA of type II CRISPR loci if present in the organism. This chain is Ribonuclease 3, found in Bacillus cereus (strain ZK / E33L).